The following is a 1363-amino-acid chain: MFLILLISLPMAFAVIGDLKCTTVSINDVDTGAPSISTDTVDVTNGLGTYYVLDRVYLNTTLLLNGYYPTSGSTYRNMALKGTLLLSRLWFKPPFLSDFINGIFAKVKNTKVIKKGVMYSEFPAITIGSTFVNTSYSVVVQPHTTNLDNKLQGLLEISVCQYTMCEYPHTICHPNLGNQRVELWHWDTGVVSCLYKRNFTYDVNADYLYFHFYQEGGTFYAYFTDTGVVTKFLFNVYLGTVLSHYYVLPLTCYSAMTLEYWVTPLTSKQYLLAFNQDGVIFNAVDCKSDFMSEIKCKTLSIAPSTGVYELNGYTVQPIADVYRRIPNLPDCNIEAWLNDKSVPSPLNWERKTFSNCNFNMSSLMSFIQADSFTCNNIEAAKIYGMCFSSITIDKFAIPNGRKVDLQLGNLGYLQSFNYRIDTTAASCQLYYNLPAANVSVSRFNPSTWNRRFGFTEQSVFKPQPVGVFTHHDVVYAQHCFKAPTNFCPCKLDGSLCVGNGPGIDAGYKNSGIGTCPAGTNYLTCHNAAQCDCLCTPDPITSKSTGPYKCPQTKYLVGIGEHCSGLAIKSDYCGGNPCTCQPQAFLGWSVDSCLQGDRCNIFANFILHDVNSGTTCSTDLQKSNTDIILGVCVNYDLYGITGQGIFVEVNATYYNSWQNLLYDSNGNLYGFRDYLTNRTFMIRSCYSGRVSAAFHANSSEPALLFRNIKCNYVFNNTLSRQLQPINYFDSYLGCVVNADNSTSSVVQTCDLTVGSGYCVDYSTKRRSRRAITTGYRFTNFEPFTVNSVNDSLEPVGGLYEIQIPSEFTIGNMEEFIQTSSPKVTIDCSAFVCGDYAACKSQLVEYGSFCDNINAILTEVNELLDTTQLQVANSLMNGVTLSTKLKDGVNFNVDDINFSPVLGCLGSDCNKVSSRSAIEDLLFSKVKLSDVGFVEAYNNCTGGAEIRDLICVQSYNGIKVLPPLLSVNQISGYTLAATSASLFPPWSAAAGVPFYLNVQYRINGIGVTMDVLSQNQKLIANAFNNALDAIQEGFDATNSALVKIQAVVNANAEALNNLLQQLSNRFGAISSSLQEILSRLDALEAQAQIDRLINGRLTALNAYVSQQLSDSTLVKFSAAQAMEKVNECVKSQSSRINFCGNGNHIISLVQNAPYGLYFIHFSYVPTKYVTAKVSPGLCIAGDRGIAPKSGYFVNVNNTWMFTGSGYYYPEPITGNNVVVMSTCAVNYTKAPDVMLNISTPNLHDFKEELDQWFKNQTSVAPDLSLDYINVTFLDLQDEMNRLQEAIKVLNQSYINLKDIGTYEYYVKWPWYVWLLIGFAGVAMLVLLFFICCCTGCGTSCFKICGGCCDDYTGHQELVIKTSHDD.

The signal sequence occupies residues 1 to 13 (MFLILLISLPMAF). At 14–1307 (AVIGDLKCTT…GTYEYYVKWP (1294 aa)) the chain is on the extracellular side. Residues 15-298 (VIGDLKCTTV…DFMSEIKCKT (284 aa)) enclose the BetaCoV S1-NTD domain. 5 disulfides stabilise this stretch: Cys21–Cys165, Cys160–Cys193, Cys172–Cys252, Cys286–Cys296, and Cys331–Cys356. Asn59 and Asn133 each carry an N-linked (GlcNAc...) asparagine; by host glycan. Asn198 carries an N-linked (GlcNAc...) asparagine; by host glycan. Residues 329 to 617 (PDCNIEAWLN…DVNSGTTCST (289 aa)) enclose the BetaCoV S1-CTD domain. An N-linked (GlcNAc...) asparagine; by host glycan is attached at Asn359. 2 disulfides stabilise this stretch: Cys374–Cys427 and Cys386–Cys615. N-linked (GlcNAc...) asparagine; by host glycans are attached at residues Asn437, Asn649, Asn676, Asn696, Asn714, Asn739, and Asn788. Fusion peptide stretches follow at residues 914 to 935 (SAIE…VEAY) and 933 to 953 (EAYN…VQSY). Asn937 carries N-linked (GlcNAc...) asparagine; by host glycosylation. A disulfide bridge links Cys938 with Cys949. The interval 1014 to 1064 (QKLIANAFNNALDAIQEGFDATNSALVKIQAVVNANAEALNNLLQQLSNRF) is heptad repeat 1. A coiled-coil region spans residues 1043–1087 (QAVVNANAEALNNLLQQLSNRFGAISSSLQEILSRLDALEAQAQI). Residues Asn1194, Asn1224, Asn1234, Asn1253, Asn1267, and Asn1288 are each glycosylated (N-linked (GlcNAc...) asparagine; by host). The segment at 1258 to 1296 (APDLSLDYINVTFLDLQDEMNRLQEAIKVLNQSYINLKD) is heptad repeat 2. Positions 1269 to 1297 (TFLDLQDEMNRLQEAIKVLNQSYINLKDI) form a coiled coil. The chain crosses the membrane as a helical span at residues 1308-1328 (WYVWLLIGFAGVAMLVLLFFI). The Cytoplasmic portion of the chain corresponds to 1329–1363 (CCCTGCGTSCFKICGGCCDDYTGHQELVIKTSHDD). A KxHxx motif is present at residues 1359-1363 (TSHDD).

This sequence belongs to the betacoronaviruses spike protein family. As to quaternary structure, homotrimer; each monomer consists of a S1 and a S2 subunit. The resulting peplomers protrude from the virus surface as spikes. In terms of processing, specific enzymatic cleavages in vivo yield mature proteins. The precursor is processed into S1 and S2 by host cell furin or another cellular protease to yield the mature S1 and S2 proteins. Additionally, a second cleavage leads to the release of a fusion peptide after viral attachment to host cell receptor. Post-translationally, the cytoplasmic Cys-rich domain is palmitoylated. Spike glycoprotein is digested within host endosomes.

The protein resides in the virion membrane. It is found in the host endoplasmic reticulum-Golgi intermediate compartment membrane. The protein localises to the host cell membrane. Attaches the virion to the cell membrane by interacting with host receptor, initiating the infection. Functionally, mediates fusion of the virion and cellular membranes by acting as a class I viral fusion protein. Under the current model, the protein has at least three conformational states: pre-fusion native state, pre-hairpin intermediate state, and post-fusion hairpin state. During viral and target cell membrane fusion, the coiled coil regions (heptad repeats) assume a trimer-of-hairpins structure, positioning the fusion peptide in close proximity to the C-terminal region of the ectodomain. The formation of this structure appears to drive apposition and subsequent fusion of viral and target cell membranes. Its function is as follows. Acts as a viral fusion peptide which is unmasked following S2 cleavage occurring upon virus endocytosis. This is Spike glycoprotein from Bovine coronavirus (strain vaccine) (BCoV).